The following is a 308-amino-acid chain: MHIERLAVDESVGRAMPPQRFIEALSDLGVPVEFAGEDEQFGPGDAVASFGHRDAFLDADWVHCIRAGYDEFPVGVYEEAGTYLTNSTGIHGTTVGETVAGYMLTFARRLHAYRDAQHDHAWDLPRYEEPFTLAGERVCVVGLGTLGRGVVDRAAALGMEVVGVRRSGDPVDNVSTVYTPDRLHEAIADARFVVLATPLTDETEGMVAAPEFETMREDASLVNVARGPVVVESDLVAALDSGDIAGAALDVFSEEPLPEDSPLWDFEDVLITPHVSAATSKYHEDVAALIRENIEKIATGDELTNRVV.

NAD(+) contacts are provided by residues 145 to 146 (TL), 224 to 226 (VAR), and Asp-250. The active site involves Arg-226. Glu-255 is a catalytic residue. The Proton donor role is filled by His-274. An NAD(+)-binding site is contributed by 274–277 (HVSA).

This sequence belongs to the D-isomer specific 2-hydroxyacid dehydrogenase family. As to quaternary structure, homotetramer.

Catalyzes the stereospecific NAD(P)H-dependent reduction of 2-ketocarboxylic acids into the corresponding D-2-hydroxycarboxylic acids. Can use both NADPH or NADH as reductant, displaying a marked preference for NADPH over NADH. Shows a broad substrate specificity, although it displays a marked preference for the 2-ketocarboxylic acids having an unbranched chain of 4-5 carbon atoms. This is D-2-hydroxyacid dehydrogenase (ddh) from Haloferax mediterranei (strain ATCC 33500 / DSM 1411 / JCM 8866 / NBRC 14739 / NCIMB 2177 / R-4) (Halobacterium mediterranei).